Reading from the N-terminus, the 177-residue chain is Large ribosomal subunit protein uL6 (177 aa).

It belongs to the universal ribosomal protein uL6 family. As to quaternary structure, part of the 50S ribosomal subunit.

Its function is as follows. This protein binds to the 23S rRNA, and is important in its secondary structure. It is located near the subunit interface in the base of the L7/L12 stalk, and near the tRNA binding site of the peptidyltransferase center. The polypeptide is Large ribosomal subunit protein uL6 (Sinorhizobium fredii (strain NBRC 101917 / NGR234)).